A 430-amino-acid polypeptide reads, in one-letter code: Enolase (430 aa).

Residue Gln-165 coordinates (2R)-2-phosphoglycerate. Residue Glu-207 is the Proton donor of the active site. Mg(2+) contacts are provided by Asp-244, Glu-287, and Asp-314. Residues Lys-339, Arg-368, Ser-369, and Lys-390 each coordinate (2R)-2-phosphoglycerate. The active-site Proton acceptor is Lys-339.

Belongs to the enolase family. In terms of assembly, component of the RNA degradosome, a multiprotein complex involved in RNA processing and mRNA degradation. Requires Mg(2+) as cofactor.

It localises to the cytoplasm. The protein localises to the secreted. It is found in the cell surface. The enzyme catalyses (2R)-2-phosphoglycerate = phosphoenolpyruvate + H2O. It functions in the pathway carbohydrate degradation; glycolysis; pyruvate from D-glyceraldehyde 3-phosphate: step 4/5. In terms of biological role, catalyzes the reversible conversion of 2-phosphoglycerate (2-PG) into phosphoenolpyruvate (PEP). It is essential for the degradation of carbohydrates via glycolysis. The protein is Enolase of Xanthomonas oryzae pv. oryzae (strain MAFF 311018).